Consider the following 380-residue polypeptide: Asporin (380 aa).

Residues 1 to 14 (MKEYVLLLFLALCS) form the signal peptide. Positions 15 to 32 (AKPFFSPSHIALKNMMLK) are excised as a propeptide. Residues 35-54 (EDTDDDDDDDDDDDDDDEDN) show a composition bias toward acidic residues. The disordered stretch occupies residues 35-59 (EDTDDDDDDDDDDDDDDEDNSLFPT). The O-linked (GalNAc...) serine glycan is linked to Ser55. Positions 66–102 (FFPFDLFPMCPFGCQCYSRVVHCSDLGLTSVPTNIPF) constitute an LRRNT domain. Cystine bridges form between Cys75-Cys81 and Cys79-Cys88. LRR repeat units follow at residues 103-124 (DTRM…DFKG), 127-148 (SLYG…AFLT), 151-173 (KLRR…PKSL), 174-193 (AELR…TFKG), 196-219 (ALHV…AFEG), 242-263 (TLLE…DFKR), 266-287 (ELQR…SLAN), 290-312 (RVRE…PELK), 313-334 (YLQI…DFCP), 335-357 (TVPK…VKYW), and 358-380 (EMQP…NFGM). Positions 166–212 (PLNLPKSLAELRIHENKVKKIQKDTFKGMNALHVLEMSANPLDNNGI) are interaction with TGFB1. A glycan (N-linked (GlcNAc...) asparagine) is linked at Asn282. Cys333 and Cys366 are disulfide-bonded.

Belongs to the small leucine-rich proteoglycan (SLRP) family. SLRP class I subfamily. As to quaternary structure, interacts with TGFB1, TGFB2 and TGFB3. DCN, BGN, and FMOD inhibit binding to TGFB1. Interacts with BMP2. Interacts in vitro with type II collagen. Interacts with type I collagen. DCN can inhibit collagen binding. There is no serine/glycine dipeptide sequence expected for the attachment of O-linked glycosaminoglycans and this is probably not a proteoglycan. The O-linked polysaccharide on 54-Ser is probably the mucin type linked to GalNAc. Post-translationally, the N-linked glycan at Asn-282 is composed of variable structures of GlcNAc, mannose, fucose, HexNAc and hexose. Higher levels in osteoarthritic articular cartilage, aorta, uterus. Moderate expression in small intestine, heart, liver, bladder, ovary, stomach, and in the adrenal, thyroid, and mammary glands. Low expression in trachea, bone marrow, and lung. Colocalizes with TGFB1 in chondrocytes within osteoarthritic (OA) lesions of articular cartilage.

Its subcellular location is the secreted. The protein resides in the extracellular space. It localises to the extracellular matrix. Functionally, negatively regulates periodontal ligament (PDL) differentiation and mineralization to ensure that the PDL is not ossified and to maintain homeostasis of the tooth-supporting system. Inhibits BMP2-induced cytodifferentiation of PDL cells by preventing its binding to BMPR1B/BMP type-1B receptor, resulting in inhibition of BMP-dependent activation of SMAD proteins. Critical regulator of TGF-beta in articular cartilage and plays an essential role in cartilage homeostasis and osteoarthritis (OA) pathogenesis. Negatively regulates chondrogenesis in the articular cartilage by blocking the TGF-beta/receptor interaction on the cell surface and inhibiting the canonical TGF-beta/Smad signal. Binds calcium and plays a role in osteoblast-driven collagen biomineralization activity. The protein is Asporin (ASPN) of Homo sapiens (Human).